Consider the following 735-residue polypeptide: DNA ligase 1 (735 aa).

The span at 1 to 11 shows a compositional bias: basic and acidic residues; the sequence is MAGDKQGDKQA. A disordered region spans residues 1-23; it reads MAGDKQGDKQAETTSVPAEARER. NAD(+)-binding positions include 48-52, 97-98, and Glu128; these read DAEFD and SL. Lys130 serves as the catalytic N6-AMP-lysine intermediate. NAD(+)-binding residues include Arg151, Glu188, Lys305, and Lys329. Residues Cys423, Cys426, Cys442, and Cys448 each contribute to the Zn(2+) site. Residues 643–732 form the BRCT domain; the sequence is EGPRPLEGLT…PEAAADVALS (90 aa).

This sequence belongs to the NAD-dependent DNA ligase family. LigA subfamily. Mg(2+) serves as cofactor. Mn(2+) is required as a cofactor.

It carries out the reaction NAD(+) + (deoxyribonucleotide)n-3'-hydroxyl + 5'-phospho-(deoxyribonucleotide)m = (deoxyribonucleotide)n+m + AMP + beta-nicotinamide D-nucleotide.. In terms of biological role, DNA ligase that catalyzes the formation of phosphodiester linkages between 5'-phosphoryl and 3'-hydroxyl groups in double-stranded DNA using NAD as a coenzyme and as the energy source for the reaction. It is essential for DNA replication and repair of damaged DNA. The sequence is that of DNA ligase 1 from Streptomyces coelicolor (strain ATCC BAA-471 / A3(2) / M145).